Consider the following 817-residue polypeptide: Verprolin (817 aa).

Over residues 1–15 the composition is skewed to pro residues; that stretch reads MAGAPAPPPPPPPPA. Residues 1–752 are disordered; the sequence is MAGAPAPPPP…THTNQPDVDV (752 aa). A WH2 1 domain is found at 30 to 47; that stretch reads GRDALLGDIRKGMKLKKA. Positions 37–51 are enriched in basic and acidic residues; it reads DIRKGMKLKKAETND. The segment covering 62–79 has biased composition (low complexity); it reads VSSASGSSGTVSSKGPSM. The 20-residue stretch at 87-106 folds into the WH2 2 domain; the sequence is MGAPQLGDILAGGIPKLKHI. Residue N109 is glycosylated (N-linked (GlcNAc...) asparagine). A compositionally biased stretch (pro residues) spans 119 to 180; sequence SAPPIPGAVP…VPSSPAPPLP (62 aa). A glycan (N-linked (GlcNAc...) asparagine) is linked at N212. Pro residues predominate over residues 236-245; it reads PQAPPPPPTP. Residues 254-265 show a composition bias toward polar residues; sequence IKPTDNAVSPPS. Over residues 306 to 335 the composition is skewed to pro residues; it reads SQPPLPSSAPPIPTSHAPPLPPTAPPPPSL. The segment covering 336–348 has biased composition (low complexity); the sequence is PNVTSAPKKATSA. Residue N337 is glycosylated (N-linked (GlcNAc...) asparagine). Pro residues predominate over residues 372–382; it reads PVPPTLAPPLP. An N-linked (GlcNAc...) asparagine glycan is attached at N383. Positions 383–395 are enriched in low complexity; it reads NTTSVPPNKASSM. The segment covering 396 to 407 has biased composition (pro residues); sequence PAPPPPPPPPPG. Residues 408-422 are compositionally biased toward low complexity; sequence AFSTSSALSASSIPL. The segment covering 423 to 432 has biased composition (pro residues); that stretch reads APLPPPPPPS. The span at 447-469 shows a compositional bias: low complexity; that stretch reads LTTNKPSASSKQSKISSSSSSSA. Positions 502–516 are enriched in basic and acidic residues; the sequence is DKQEDVIGSSKDDNV. Residues 518–534 are compositionally biased toward low complexity; that stretch reads PSPISPSINPPKQSSQN. S519 is subject to Phosphoserine. A compositionally biased stretch (pro residues) spans 557–579; the sequence is APPPHTDAMAPPLPPSAPPPPIT. Residues 588 to 597 are compositionally biased toward basic and acidic residues; sequence GDDHTNDKSE. The segment covering 649 to 661 has biased composition (pro residues); that stretch reads PPSPPVAAAPPLP. The segment covering 713–737 has biased composition (polar residues); sequence MDTGTSNSPSKNLKQRLFSTGGSTL. Position 762 is a phosphoserine (S762). N-linked (GlcNAc...) asparagine glycosylation is found at N784 and N796. A disordered region spans residues 786 to 806; the sequence is SQMPKPRPFQNKTKLYPSGKG.

Belongs to the verprolin family. N-glycosylated.

Its subcellular location is the cytoplasm. It is found in the cytoskeleton. Functionally, involved in cytoskeletal organization and cellular growth. May exert its effects on the cytoskeleton directly, or indirectly via proline-binding proteins (e.g. profilin) or proteins possessing SH3 domains. This is Verprolin (VRP1) from Saccharomyces cerevisiae (strain ATCC 204508 / S288c) (Baker's yeast).